Consider the following 79-residue polypeptide: Methionine-rich peptide X (79 aa).

The signal sequence occupies residues 1–22 (MKKLAAVMLTSCLMVAVGASFA). The segment at 37–79 (KKDDMAKDEMKKDSMAKDGMKKDAMKKDAMMKKDGMTKDEMKK) is disordered.

In terms of processing, protein is oxidized (possibly on Met residues) when cells are exposed to chlorite or hypochlorite; initially the protein is highly oxidized, by 50 minutes all protein is in the reduced form.

It is found in the periplasm. In terms of biological role, serves as an oxidative stress sink, specifically for chlorite and hypochlorite. The sequence is that of Methionine-rich peptide X from Azospira oryzae (strain ATCC BAA-33 / DSM 13638 / PS) (Dechlorosoma suillum).